Reading from the N-terminus, the 342-residue chain is L-threonine 3-dehydrogenase (342 aa).

Cys38 provides a ligand contact to Zn(2+). Catalysis depends on charge relay system residues Thr40 and His43. Positions 63 and 64 each coordinate Zn(2+). Residues Ile175, Asp195, Arg200, 263-265 (LGI), and 287-288 (VY) each bind NAD(+).

This sequence belongs to the zinc-containing alcohol dehydrogenase family. Homotetramer. The cofactor is Zn(2+).

The protein localises to the cytoplasm. The enzyme catalyses L-threonine + NAD(+) = (2S)-2-amino-3-oxobutanoate + NADH + H(+). The protein operates within amino-acid degradation; L-threonine degradation via oxydo-reductase pathway; glycine from L-threonine: step 1/2. Catalyzes the NAD(+)-dependent oxidation of L-threonine to 2-amino-3-ketobutyrate. This Ruegeria pomeroyi (strain ATCC 700808 / DSM 15171 / DSS-3) (Silicibacter pomeroyi) protein is L-threonine 3-dehydrogenase.